The chain runs to 2353 residues: Nonribosomal peptide synthetase 7 (2353 aa).

The interval 305 to 684 (TFSALNTRAN…AIEEVEDSAV (380 aa)) is adenylation 1. The Carrier 1 domain maps to 776–853 (RDLTDSEKVV…QVAAAVQPQP (78 aa)). Serine 813 carries the post-translational modification O-(pantetheine 4'-phosphoryl)serine. The tract at residues 885-1147 (EDAFPVTPFQ…LMVAPLRVKV (263 aa)) is condensation 1. Residues 1338–1725 (TYAGLAIKMN…QTNVFRQCAV (388 aa)) are adenylation 2. The 77-residue stretch at 1826–1902 (EICSEAEREL…EQAALMVQGQ (77 aa)) folds into the Carrier 2 domain. O-(pantetheine 4'-phosphoryl)serine is present on serine 1863. The interval 1939–2214 (EDIYPCSPGQ…NGNCANFLPY (276 aa)) is condensation 2.

The protein belongs to the NRP synthetase family.

Functionally, nonribosomal peptide synthesis (NRPS) is a key mechanism responsible for the biosynthesis of bioactive metabolites which are potentially contributing to organismal virulence. This chain is Nonribosomal peptide synthetase 7 (NRPS7), found in Aspergillus fumigatus (strain ATCC MYA-4609 / CBS 101355 / FGSC A1100 / Af293) (Neosartorya fumigata).